The following is a 233-amino-acid chain: Large ribosomal subunit protein uL1 (233 aa).

The protein belongs to the universal ribosomal protein uL1 family. Part of the 50S ribosomal subunit.

In terms of biological role, binds directly to 23S rRNA. The L1 stalk is quite mobile in the ribosome, and is involved in E site tRNA release. Protein L1 is also a translational repressor protein, it controls the translation of the L11 operon by binding to its mRNA. The sequence is that of Large ribosomal subunit protein uL1 from Pelobacter propionicus (strain DSM 2379 / NBRC 103807 / OttBd1).